We begin with the raw amino-acid sequence, 286 residues long: 4-hydroxybenzoate octaprenyltransferase (286 aa).

Helical transmembrane passes span 20–40 (IGTLLLLWPCLMALVLAAQGL), 43–63 (IKVLLIFIVGVVIMRANGCII), 96–116 (LFTLLGLAAFCLVLWLNPLVV), 142–162 (FLGIVWSWSIPMAYAAQLGEV), 167–187 (WWLFMANWCWTVAYDTMYAIV), 210–230 (QIIGVFQLAALGCFVMAGLVA), 235–255 (IYGLGIISFIGFAVYQQRLIF), and 266–286 (FLNNNWAGMVLFIALALDYMI).

It belongs to the UbiA prenyltransferase family. Mg(2+) is required as a cofactor.

The protein localises to the cell inner membrane. The catalysed reaction is all-trans-octaprenyl diphosphate + 4-hydroxybenzoate = 4-hydroxy-3-(all-trans-octaprenyl)benzoate + diphosphate. It functions in the pathway cofactor biosynthesis; ubiquinone biosynthesis. Its function is as follows. Catalyzes the prenylation of para-hydroxybenzoate (PHB) with an all-trans polyprenyl group. Mediates the second step in the final reaction sequence of ubiquinone-8 (UQ-8) biosynthesis, which is the condensation of the polyisoprenoid side chain with PHB, generating the first membrane-bound Q intermediate 3-octaprenyl-4-hydroxybenzoate. The chain is 4-hydroxybenzoate octaprenyltransferase from Shewanella frigidimarina (strain NCIMB 400).